The chain runs to 207 residues: Guanylate kinase (207 aa).

The 181-residue stretch at 5–185 folds into the Guanylate kinase-like domain; it reads GFVLLISGPS…SYEALRAILI (181 aa). Residue 12–19 participates in ATP binding; the sequence is GPSGAGKS.

Belongs to the guanylate kinase family.

It localises to the cytoplasm. The enzyme catalyses GMP + ATP = GDP + ADP. Its function is as follows. Essential for recycling GMP and indirectly, cGMP. The polypeptide is Guanylate kinase (gmk) (Campylobacter jejuni subsp. jejuni serotype O:2 (strain ATCC 700819 / NCTC 11168)).